Consider the following 213-residue polypeptide: Uridine kinase (213 aa).

15-22 contributes to the ATP binding site; the sequence is GASASGKS.

It belongs to the uridine kinase family.

It is found in the cytoplasm. The enzyme catalyses uridine + ATP = UMP + ADP + H(+). The catalysed reaction is cytidine + ATP = CMP + ADP + H(+). It participates in pyrimidine metabolism; CTP biosynthesis via salvage pathway; CTP from cytidine: step 1/3. It functions in the pathway pyrimidine metabolism; UMP biosynthesis via salvage pathway; UMP from uridine: step 1/1. This chain is Uridine kinase, found in Escherichia coli O157:H7.